The sequence spans 351 residues: Photosystem II D2 protein (351 aa).

Residues 39-59 (CAYLAVGGWLTGTTFVTSWYT) traverse the membrane as a helical segment. H116 contributes to the chlorophyll a binding site. The helical transmembrane segment at 123 to 139 (GFCLRQFEIARLVGLRP) threads the bilayer. 2 residues coordinate pheophytin a: Q128 and N141. The helical transmembrane segment at 151-164 (VFVSVFLMYPLGQA) threads the bilayer. H196 contributes to the chlorophyll a binding site. A helical transmembrane segment spans residues 206-226 (GALLCAIHGATVQNTLFEDGD). Positions 213 and 260 each coordinate a plastoquinone. Fe cation is bound at residue H213. Residue H267 coordinates Fe cation. A helical membrane pass occupies residues 277 to 293 (GLWTSAFGIVGLALNLR).

This sequence belongs to the reaction center PufL/M/PsbA/D family. In terms of assembly, PSII is composed of 1 copy each of membrane proteins PsbA, PsbB, PsbC, PsbD, PsbE, PsbF, PsbH, PsbI, PsbJ, PsbK, PsbL, PsbM, PsbT, PsbX, PsbY, PsbZ, Psb30/Ycf12, at least 3 peripheral proteins of the oxygen-evolving complex and a large number of cofactors. It forms dimeric complexes. The cofactor is The D1/D2 heterodimer binds P680, chlorophylls that are the primary electron donor of PSII, and subsequent electron acceptors. It shares a non-heme iron and each subunit binds pheophytin, quinone, additional chlorophylls, carotenoids and lipids. There is also a Cl(-1) ion associated with D1 and D2, which is required for oxygen evolution. The PSII complex binds additional chlorophylls, carotenoids and specific lipids..

It localises to the plastid. It is found in the chloroplast thylakoid membrane. It carries out the reaction 2 a plastoquinone + 4 hnu + 2 H2O = 2 a plastoquinol + O2. Functionally, photosystem II (PSII) is a light-driven water:plastoquinone oxidoreductase that uses light energy to abstract electrons from H(2)O, generating O(2) and a proton gradient subsequently used for ATP formation. It consists of a core antenna complex that captures photons, and an electron transfer chain that converts photonic excitation into a charge separation. The D1/D2 (PsbA/PsbD) reaction center heterodimer binds P680, the primary electron donor of PSII as well as several subsequent electron acceptors. D2 is needed for assembly of a stable PSII complex. The sequence is that of Photosystem II D2 protein from Porphyra purpurea (Red seaweed).